We begin with the raw amino-acid sequence, 130 residues long: uncharacterized protein (130 aa).

The N-terminal stretch at 1 to 19 (MKVLGNILWWAFVGFMAYA) is a signal peptide.

This is an uncharacterized protein from Escherichia coli (strain K12).